An 81-amino-acid chain; its full sequence is Gamma-conotoxin-like TxMEKL-0511 (81 aa).

Positions 1–19 (MEKLTILLLVAAVLLSIQA) are cleaved as a signal peptide. Residues 20 to 45 (LNQEKHQRAKINLLSKRKPPAERWWR) constitute a propeptide that is removed on maturation. Intrachain disulfides connect cysteine 49/cysteine 63, cysteine 56/cysteine 67, and cysteine 62/cysteine 72.

It belongs to the conotoxin O2 superfamily. In terms of tissue distribution, expressed by the venom duct.

Its subcellular location is the secreted. In terms of biological role, gamma-conotoxins may act on voltage-gated non-specific cation pacemaker channels (HCN). This is Gamma-conotoxin-like TxMEKL-0511 from Conus textile (Cloth-of-gold cone).